The sequence spans 238 residues: Flagellar L-ring protein (238 aa).

An N-terminal signal peptide occupies residues 1–16 (MRKLILISLCIFFLAS). Cys17 carries the N-palmitoyl cysteine lipid modification. The S-diacylglycerol cysteine moiety is linked to residue Cys17.

The protein belongs to the FlgH family. As to quaternary structure, the basal body constitutes a major portion of the flagellar organelle and consists of four rings (L,P,S, and M) mounted on a central rod.

The protein resides in the cell outer membrane. It is found in the bacterial flagellum basal body. In terms of biological role, assembles around the rod to form the L-ring and probably protects the motor/basal body from shearing forces during rotation. The sequence is that of Flagellar L-ring protein from Thermodesulfovibrio yellowstonii (strain ATCC 51303 / DSM 11347 / YP87).